Here is a 424-residue protein sequence, read N- to C-terminus: Histidine--tRNA ligase (424 aa).

Belongs to the class-II aminoacyl-tRNA synthetase family. Homodimer.

It localises to the cytoplasm. It carries out the reaction tRNA(His) + L-histidine + ATP = L-histidyl-tRNA(His) + AMP + diphosphate + H(+). The sequence is that of Histidine--tRNA ligase from Desulfitobacterium hafniense (strain DSM 10664 / DCB-2).